The following is a 321-amino-acid chain: Glycerol-3-phosphate dehydrogenase [NAD(P)+] (321 aa).

NADPH-binding residues include Ser10, Phe11, Arg31, Arg32, and Lys104. 2 residues coordinate sn-glycerol 3-phosphate: Lys104 and Gly132. NADPH is bound at residue Ala136. The sn-glycerol 3-phosphate site is built by Lys186, Asp238, Ser248, Arg249, and Asn250. Lys186 (proton acceptor) is an active-site residue. An NADPH-binding site is contributed by Arg249. Glu272 is an NADPH binding site.

The protein belongs to the NAD-dependent glycerol-3-phosphate dehydrogenase family.

It is found in the cytoplasm. The enzyme catalyses sn-glycerol 3-phosphate + NAD(+) = dihydroxyacetone phosphate + NADH + H(+). It catalyses the reaction sn-glycerol 3-phosphate + NADP(+) = dihydroxyacetone phosphate + NADPH + H(+). Its function is as follows. Catalyzes the reduction of the glycolytic intermediate dihydroxyacetone phosphate (DHAP) to sn-glycerol 3-phosphate (G3P). The protein is Glycerol-3-phosphate dehydrogenase [NAD(P)+] of Methanothermobacter thermautotrophicus (strain ATCC 29096 / DSM 1053 / JCM 10044 / NBRC 100330 / Delta H) (Methanobacterium thermoautotrophicum).